Consider the following 227-residue polypeptide: Transcription elongation factor A protein-like 2 (227 aa).

Disordered regions lie at residues 1-145 (MEKL…TNKG) and 202-227 (FYPR…IPYV). 5 stretches are compositionally biased toward basic and acidic residues: residues 18 to 43 (IDNE…KLEN), 50 to 82 (TGKR…KGKS), 90 to 113 (TEGK…REPE), 120 to 136 (SETR…DIPR), and 206 to 227 (GPRE…IPYV).

The protein belongs to the TFS-II family. TFA subfamily.

The protein resides in the nucleus. Functionally, may be involved in transcriptional regulation. This Homo sapiens (Human) protein is Transcription elongation factor A protein-like 2 (TCEAL2).